We begin with the raw amino-acid sequence, 329 residues long: D-alanine--D-alanine ligase (329 aa).

Positions K120–R326 constitute an ATP-grasp domain. ATP is bound at residue A150–E205. Mg(2+) is bound by residues D280, E293, and N295.

The protein belongs to the D-alanine--D-alanine ligase family. Mg(2+) is required as a cofactor. The cofactor is Mn(2+).

It is found in the cytoplasm. It catalyses the reaction 2 D-alanine + ATP = D-alanyl-D-alanine + ADP + phosphate + H(+). It participates in cell wall biogenesis; peptidoglycan biosynthesis. Cell wall formation. This is D-alanine--D-alanine ligase from Aeromonas salmonicida (strain A449).